The primary structure comprises 263 residues: Purine nucleoside phosphorylase SAS1121 (263 aa).

Positions 79, 124, and 141 each coordinate Zn(2+).

The protein belongs to the purine nucleoside phosphorylase YfiH/LACC1 family. In terms of assembly, homodimer. Cu(2+) is required as a cofactor. Requires Zn(2+) as cofactor.

It carries out the reaction adenosine + phosphate = alpha-D-ribose 1-phosphate + adenine. It catalyses the reaction S-methyl-5'-thioadenosine + phosphate = 5-(methylsulfanyl)-alpha-D-ribose 1-phosphate + adenine. The enzyme catalyses inosine + phosphate = alpha-D-ribose 1-phosphate + hypoxanthine. The catalysed reaction is adenosine + H2O + H(+) = inosine + NH4(+). Its function is as follows. Purine nucleoside enzyme that catalyzes the phosphorolysis of adenosine and inosine nucleosides, yielding D-ribose 1-phosphate and the respective free bases, adenine and hypoxanthine. Also catalyzes the phosphorolysis of S-methyl-5'-thioadenosine into adenine and S-methyl-5-thio-alpha-D-ribose 1-phosphate. Also has adenosine deaminase activity. This Staphylococcus aureus (strain MSSA476) protein is Purine nucleoside phosphorylase SAS1121.